Reading from the N-terminus, the 24-residue chain is Coenzyme PQQ synthesis protein A (24 aa).

The segment at residues 16–20 (EVTMY) is a cross-link (pyrroloquinoline quinone (Glu-Tyr)).

Belongs to the PqqA family.

It functions in the pathway cofactor biosynthesis; pyrroloquinoline quinone biosynthesis. Required for coenzyme pyrroloquinoline quinone (PQQ) biosynthesis. PQQ is probably formed by cross-linking a specific glutamate to a specific tyrosine residue and excising these residues from the peptide. This is Coenzyme PQQ synthesis protein A from Acinetobacter baumannii (strain SDF).